The following is a 382-amino-acid chain: Galactokinase (382 aa).

Position 34 to 37 (34 to 37 (EHTD)) interacts with substrate. 124-130 (GAGLSSS) contacts ATP. Residues Ser130 and Glu162 each contribute to the Mg(2+) site. The active-site Proton acceptor is the Asp174. Tyr223 contributes to the substrate binding site.

This sequence belongs to the GHMP kinase family. GalK subfamily.

The protein localises to the cytoplasm. The enzyme catalyses alpha-D-galactose + ATP = alpha-D-galactose 1-phosphate + ADP + H(+). The protein operates within carbohydrate metabolism; galactose metabolism. Its function is as follows. Catalyzes the transfer of the gamma-phosphate of ATP to D-galactose to form alpha-D-galactose-1-phosphate (Gal-1-P). The protein is Galactokinase of Salmonella typhi.